Here is a 134-residue protein sequence, read N- to C-terminus: Probable salivary secreted peptide (134 aa).

A signal peptide spans 1–24 (MGAQKTIAYLAIIAIAVIFAQVNT).

It is found in the secreted. This chain is Probable salivary secreted peptide, found in Bombus ignitus (Bumblebee).